Reading from the N-terminus, the 511-residue chain is Rab proteins geranylgeranyltransferase component A (511 aa).

Belongs to the Rab GDI family.

It is found in the cytoplasm. Its subcellular location is the perinuclear region. The protein resides in the cytoskeleton. The protein localises to the spindle pole. In terms of biological role, binds unprenylated Rab proteins, presents it to the catalytic component B, and remains bound to it after the geranylgeranyl transfer reaction. The component A is thought to be regenerated by transferring its prenylated Rab to a protein acceptor. The sequence is that of Rab proteins geranylgeranyltransferase component A from Drosophila melanogaster (Fruit fly).